A 1535-amino-acid chain; its full sequence is ABC multidrug transporter atrF (1535 aa).

Positions 1-115 are disordered; sequence MADDHRQPEA…DEQASSTDEY (115 aa). N-linked (GlcNAc...) asparagine glycosylation is present at asparagine 33. A compositionally biased stretch (low complexity) spans 34-45; sequence TTSTSETDASAD. The span at 46–76 shows a compositional bias: basic and acidic residues; that stretch reads ADARWGERNQGDPVSRRGAMEEFEEMRREVT. Basic residues predominate over residues 79 to 93; the sequence is SLHRTRSAKDARRRS. N-linked (GlcNAc...) asparagine glycosylation is found at asparagine 149, asparagine 274, asparagine 287, and asparagine 351. Positions 185 to 427 constitute an ABC transporter 1 domain; the sequence is VPALHFGKRP…FVDLGFYCPE (243 aa). The next 7 helical transmembrane spans lie at 540–560, 573–593, 618–638, 646–666, 680–700, 703–723, and 791–811; these read LYTKYFIIVSNGLIVSSLFYG, GALFFSILFLVLQLTELMPAV, VVVDFPAIFCMVVPFTIIVYF, ASKFFIYFLFVYTTTFCITSL, AVRFAGIALNVLILFVGYVIP, GLIDGSIWFGWLFYVNPLSYS, and FGVVIAFTVLYLLVTVIAAEV. The disordered stretch occupies residues 834-868; that stretch reads KAQNGKGNDEEQVQNTGDNAALSRGEAKSSSSGEA. Residues 879–1117 enclose the ABC transporter 2 domain; that stretch reads FTWSNVEYTV…DVIKYFADRG (239 aa). Residue asparagine 892 is glycosylated (N-linked (GlcNAc...) asparagine). Residue 915–922 participates in ATP binding; the sequence is GASGAGKT. The next 6 helical transmembrane spans lie at 1212 to 1232, 1246 to 1266, 1295 to 1315, 1320 to 1340, 1342 to 1362, and 1384 to 1406; these read YGKLFVSVIIGIFNGFTFWML, IFLIILIPPIVLNSIVPKFYI, IPMAIVSALIYWLLWYYPVGF, SSAGYVFLMSMLFFLFQASWG, WICAFAPSFTVISNVLPFFFV, and WMYYVNPVTWWLRGVISSVFPSV. N-linked (GlcNAc...) asparagine glycosylation occurs at asparagine 1459. Helical transmembrane passes span 1477–1497 and 1503–1523; these read CFGIFLAFVIINWALVYFFIY and GWSFGMGYLFGGVGVMIEGVK.

It belongs to the ABC transporter superfamily. ABCG family. PDR (TC 3.A.1.205) subfamily.

Its subcellular location is the cell membrane. It catalyses the reaction voriconazole(in) + ATP + H2O = voriconazole(out) + ADP + phosphate + H(+). In terms of biological role, pleiotropic ABC efflux transporter involved in the basal level of azole susceptibility. Confers resistance to voriconazole. This chain is ABC multidrug transporter atrF, found in Aspergillus flavus (strain ATCC 200026 / FGSC A1120 / IAM 13836 / NRRL 3357 / JCM 12722 / SRRC 167).